We begin with the raw amino-acid sequence, 296 residues long: Cytidine deaminase (296 aa).

CMP/dCMP-type deaminase domains lie at 47-167 and 186-296; these read AESE…FGPS and DSSD…LDPE. 88–90 is a substrate binding site; that stretch reads NME. Residue H101 participates in Zn(2+) binding. E103 (proton donor) is an active-site residue. Zn(2+)-binding residues include C128 and C131.

Belongs to the cytidine and deoxycytidylate deaminase family. In terms of assembly, homodimer. It depends on Zn(2+) as a cofactor.

The catalysed reaction is cytidine + H2O + H(+) = uridine + NH4(+). It catalyses the reaction 2'-deoxycytidine + H2O + H(+) = 2'-deoxyuridine + NH4(+). This enzyme scavenges exogenous and endogenous cytidine and 2'-deoxycytidine for UMP synthesis. This Shewanella sediminis (strain HAW-EB3) protein is Cytidine deaminase.